Here is a 238-residue protein sequence, read N- to C-terminus: Large ribosomal subunit protein uL3 (238 aa).

Disordered regions lie at residues 140–164 (SHRS…KMPG) and 212–238 (LPKE…QEGA). Q151 carries the post-translational modification N5-methylglutamine. The span at 225–238 (AGGEAEAAAQQEGA) shows a compositional bias: low complexity.

This sequence belongs to the universal ribosomal protein uL3 family. As to quaternary structure, part of the 50S ribosomal subunit. Forms a cluster with proteins L14 and L19. In terms of processing, methylated by PrmB.

Functionally, one of the primary rRNA binding proteins, it binds directly near the 3'-end of the 23S rRNA, where it nucleates assembly of the 50S subunit. The polypeptide is Large ribosomal subunit protein uL3 (Bradyrhizobium diazoefficiens (strain JCM 10833 / BCRC 13528 / IAM 13628 / NBRC 14792 / USDA 110)).